The sequence spans 186 residues: uncharacterized protein (186 aa).

The region spanning 1–181 (MVSFSYKGNL…TFVSLASDFL (181 aa)) is the Macro domain.

Belongs to the MacroD-type family.

This is an uncharacterized protein from Thermoplasma volcanium (strain ATCC 51530 / DSM 4299 / JCM 9571 / NBRC 15438 / GSS1).